The chain runs to 339 residues: Ketol-acid reductoisomerase (NADP(+)) (339 aa).

Residues 1-182 (MRVYYDRDAD…GGGRAGIIET (182 aa)) enclose the KARI N-terminal Rossmann domain. NADP(+) is bound by residues 24–27 (YGSQ), arginine 48, serine 51, threonine 53, and 83–86 (DELQ). The active site involves histidine 108. Residue glycine 134 coordinates NADP(+). The KARI C-terminal knotted domain maps to 183–328 (TFKEECETDL…AKLRGMMPWI (146 aa)). Positions 191, 195, 227, and 231 each coordinate Mg(2+). A substrate-binding site is contributed by serine 252.

The protein belongs to the ketol-acid reductoisomerase family. The cofactor is Mg(2+).

The catalysed reaction is (2R)-2,3-dihydroxy-3-methylbutanoate + NADP(+) = (2S)-2-acetolactate + NADPH + H(+). It carries out the reaction (2R,3R)-2,3-dihydroxy-3-methylpentanoate + NADP(+) = (S)-2-ethyl-2-hydroxy-3-oxobutanoate + NADPH + H(+). It functions in the pathway amino-acid biosynthesis; L-isoleucine biosynthesis; L-isoleucine from 2-oxobutanoate: step 2/4. Its pathway is amino-acid biosynthesis; L-valine biosynthesis; L-valine from pyruvate: step 2/4. Functionally, involved in the biosynthesis of branched-chain amino acids (BCAA). Catalyzes an alkyl-migration followed by a ketol-acid reduction of (S)-2-acetolactate (S2AL) to yield (R)-2,3-dihydroxy-isovalerate. In the isomerase reaction, S2AL is rearranged via a Mg-dependent methyl migration to produce 3-hydroxy-3-methyl-2-ketobutyrate (HMKB). In the reductase reaction, this 2-ketoacid undergoes a metal-dependent reduction by NADPH to yield (R)-2,3-dihydroxy-isovalerate. In Methylobacterium radiotolerans (strain ATCC 27329 / DSM 1819 / JCM 2831 / NBRC 15690 / NCIMB 10815 / 0-1), this protein is Ketol-acid reductoisomerase (NADP(+)).